The sequence spans 280 residues: UDP-2,3-diacylglucosamine pyrophosphatase LpxI (280 aa).

Substrate is bound by residues A12, 74-75 (NV), Q169, 187-188 (TD), K214, and 226-233 (LPTIGVAT).

The protein belongs to the LpxI family. In terms of assembly, homodimer. Requires Mg(2+) as cofactor.

Its subcellular location is the cell inner membrane. The enzyme catalyses UDP-2-N,3-O-bis[(3R)-3-hydroxytetradecanoyl]-alpha-D-glucosamine + H2O = 2-N,3-O-bis[(3R)-3-hydroxytetradecanoyl]-alpha-D-glucosaminyl 1-phosphate + UMP + 2 H(+). It functions in the pathway glycolipid biosynthesis; lipid IV(A) biosynthesis; lipid IV(A) from (3R)-3-hydroxytetradecanoyl-[acyl-carrier-protein] and UDP-N-acetyl-alpha-D-glucosamine: step 4/6. With respect to regulation, inhibited by high concentrations of Cu(2+) and Zn(2+). Completely inhibited by EDTA in vitro. Hydrolyzes the pyrophosphate bond of UDP-2,3-diacylglucosamine to form 2,3-diacylglucosamine 1-phosphate (lipid X) and UMP by catalyzing the attack of water at the beta-P atom. Involved in the biosynthesis of lipid A, a phosphorylated glycolipid that anchors the lipopolysaccharide to the outer membrane of the cell. Can functionally complement lpxH deficiency in E.coli. Cannot use CDP-diacylglycerol as substrate. The protein is UDP-2,3-diacylglucosamine pyrophosphatase LpxI of Caulobacter vibrioides (strain ATCC 19089 / CIP 103742 / CB 15) (Caulobacter crescentus).